The chain runs to 739 residues: Sulfate transporter (739 aa).

Basic and acidic residues-rich tracts occupy residues 1–17 (MSSENKEQHDLSPRDLP) and 31–46 (TQRRSGTDLRQSETGH). The interval 1–47 (MSSENKEQHDLSPRDLPEEAFGFPSELPLETQRRSGTDLRQSETGHG) is disordered. The residue at position 12 (Ser12) is a Phosphoserine. 2 helical membrane passes run 112 to 132 (VMSGLIVGILLVPQSIAYSLL) and 137 to 157 (PIYGLYTSFFASIIYFLFGTS). Asn205 is a glycosylation site (N-linked (GlcNAc...) asparagine). 2 helical membrane passes run 227–247 (FMAGVYQVAMGFFQVGFVSVY) and 255–275 (GFVTGASFTILTSQAKYLLGL). N-linked (GlcNAc...) asparagine glycosylation occurs at Asn357. The next 4 helical transmembrane spans lie at 378–398 (LIPNVAVDAIAISIIGFAITV), 420–440 (AIGFCNIIPSFFHCITTSAAL), 455–475 (LSAIVTALVLLLVLLVIAPLF), and 524–544 (LLSTEIGLLVGVCFSMFCVIL). The STAS domain maps to 568–719 (TYKNLRSKSG…YSLSEAVAFA (152 aa)).

This sequence belongs to the SLC26A/SulP transporter (TC 2.A.53) family. Post-translationally, N-glycosylated. As to expression, distributed mainly in the thymus, testis and osteoblastic cells. Highly expressed in the bone, cartilage, kidney and colon.

Its subcellular location is the cell membrane. It is found in the apical cell membrane. It catalyses the reaction oxalate(in) + sulfate(out) = oxalate(out) + sulfate(in). The enzyme catalyses sulfate(out) + 2 chloride(in) = sulfate(in) + 2 chloride(out). It carries out the reaction oxalate(out) + 2 chloride(in) = oxalate(in) + 2 chloride(out). The catalysed reaction is bromide(in) + chloride(out) = bromide(out) + chloride(in). It catalyses the reaction nitrate(in) + chloride(out) = nitrate(out) + chloride(in). The enzyme catalyses iodide(in) + chloride(out) = iodide(out) + chloride(in). Sulfate transporter which mediates sulfate uptake into chondrocytes in order to maintain adequate sulfation of proteoglycans which is needed for cartilage development. Mediates electroneutral anion exchange of sulfate ions for oxalate ions, sulfate and oxalate ions for chloride and/or hydroxyl ions and chloride ions for bromide, iodide and nitrate ions. The coupling of sulfate transport to both hydroxyl and chloride ions likely serves to ensure transport at both acidic pH when most sulfate uptake is mediated by sulfate-hydroxide exchange and alkaline pH when most sulfate uptake is mediated by sulfate-chloride exchange. Essential for chondrocyte proliferation, differentiation and cell size expansion. The sequence is that of Sulfate transporter (Slc26a2) from Mus musculus (Mouse).